Here is a 95-residue protein sequence, read N- to C-terminus: Large ribosomal subunit protein uL23 (95 aa).

This sequence belongs to the universal ribosomal protein uL23 family. As to quaternary structure, part of the 50S ribosomal subunit. Contacts protein L29, and trigger factor when it is bound to the ribosome.

Its function is as follows. One of the early assembly proteins it binds 23S rRNA. One of the proteins that surrounds the polypeptide exit tunnel on the outside of the ribosome. Forms the main docking site for trigger factor binding to the ribosome. This chain is Large ribosomal subunit protein uL23, found in Coxiella burnetii (strain RSA 493 / Nine Mile phase I).